The following is a 619-amino-acid chain: TOX high mobility group box family member 4 (619 aa).

Disordered stretches follow at residues 153–227 and 304–337; these read LGLS…QKPV and DMDP…PPAL. Thr-176 is modified (phosphothreonine). Ser-178, Ser-181, and Ser-182 each carry phosphoserine. Basic and acidic residues predominate over residues 183–193; sequence LHEDGVEEFRR. Positions 208 to 218 are enriched in basic residues; that stretch reads KQKAPKKRKKK. The Nuclear localization signal signature appears at 213–218; the sequence is KKRKKK. Positions 223–291 form a DNA-binding region, HMG box; it reads PQKPVSAYAL…EYLKALAAYK (69 aa). The span at 307-319 shows a compositional bias: pro residues; sequence PAPPSQTPSPPPV. Position 313 is a phosphothreonine (Thr-313). Residue Ser-315 is modified to Phosphoserine. Positions 320–337 are enriched in low complexity; that stretch reads AAADPASPAPASTEPPAL. Arg-479 bears the Asymmetric dimethylarginine mark. The interval 507–529 is disordered; it reads PPPVESSPEQPVNNSPETHTVEE. Residues 512–524 show a composition bias toward low complexity; it reads SSPEQPVNNSPET. Residues Ser-548, Ser-550, Ser-558, Ser-560, and Ser-565 each carry the phosphoserine modification.

As to quaternary structure, component of the PNUTS-PP1 phosphatase complex, composed of PPP1R10/PNUTS, TOX4, WDR82 and PPP1CA or PPP1CB or PPP1CC. Interacts with PPP1R10/PNUTS. Interacts with FOXO1 and CREB1 (increased by cAMP); FOXO1 and CREB1 are required for full induction of TOX4-dependent activity and the interactions are inhibited by insulin.

It localises to the nucleus. It is found in the chromosome. Its activity is regulated as follows. In liver, recruited to target gene promoters following treatment with dexamethasone and cAMP. Binding is decreased in presence of insulin. Its function is as follows. Transcription factor that modulates cell fate reprogramming from the somatic state to the pluripotent and neuronal fate. In liver, controls the expression of hormone-regulated gluconeogenic genes such as G6PC1 and PCK1. This regulation is independent of the insulin receptor activation. Also acts as a regulatory component of protein phosphatase 1 (PP1) complexes. Component of the PNUTS-PP1 protein phosphatase complex, a PP1 complex that regulates RNA polymerase II transcription pause-release. PNUTS-PP1 also plays a role in the control of chromatin structure and cell cycle progression during the transition from mitosis into interphase. The chain is TOX high mobility group box family member 4 (TOX4) from Bos taurus (Bovine).